Consider the following 201-residue polypeptide: MGSRKCGGCLSCLLIPLALWSIIVNILLYFPNGQTSYASSNKLTNYVWYFEGICFSGIMMLIVTTVLLVLENNNNYKCCQSENCSKKYVTLLSIIFSSLGIAFSGYCLVISALGLVQGPYCRTLDGWEYAFEGTAGRFLTDSSIWIQCLEPAHVVEWNIILFSILITLSGLQVIICLIRVVMQLSKILCGSYSVIFQPGII.

Topologically, residues 1–9 (MGSRKCGGC) are cytoplasmic. The helical transmembrane segment at 10–30 (LSCLLIPLALWSIIVNILLYF) threads the bilayer. Topologically, residues 31 to 49 (PNGQTSYASSNKLTNYVWY) are extracellular. A helical transmembrane segment spans residues 50 to 70 (FEGICFSGIMMLIVTTVLLVL). Residues 71–93 (ENNNNYKCCQSENCSKKYVTLLS) are Cytoplasmic-facing. A helical transmembrane segment spans residues 94–114 (IIFSSLGIAFSGYCLVISALG). Over 115-157 (LVQGPYCRTLDGWEYAFEGTAGRFLTDSSIWIQCLEPAHVVEW) the chain is Extracellular. A helical membrane pass occupies residues 158-178 (NIILFSILITLSGLQVIICLI). Topologically, residues 179–201 (RVVMQLSKILCGSYSVIFQPGII) are cytoplasmic.

This sequence belongs to the L6 tetraspanin family.

Its subcellular location is the membrane. The sequence is that of Transmembrane 4 L6 family member 18 (TM4SF18) from Homo sapiens (Human).